The chain runs to 522 residues: Sugar carrier protein A (522 aa).

Residues 1–22 (MAGGSLAPAGVAKERAEQYQGK) are Cytoplasmic-facing. 12 helical membrane passes run 23 to 43 (VTFAVFVACMVAAVGGSIFGY), 87 to 107 (AFTSSLYLAGLAASLVAGPIT), 121 to 141 (ISFLIGAALNATAINLAMLLL), 144 to 164 (IMLGVGIGFGNQAVPLYLSEM), 173 to 193 (LNIMFQLATTSGIFTANMVNY), 205 to 225 (LSLGLAAAPALLMTIGGLLLP), 286 to 306 (LVMAIFMPTFQILTGINIILF), 322 to 342 (ALYSSAVTGAVLCSSTFISIA), 351 to 371 (FLLISGGIQMITCQVIVAIIL), 384 to 404 (SFSVLVVIMICLFVLAFGWSW), 430 to 450 (AVNLFFTFVIAQSFPSLLCAF), and 453 to 473 (GIFLFFAGWVTVMTAFVYIFL). Residues 474–522 (PETKGVPIEEMIFLWRKHWFWKKIVPGQPEVDDSRESMEMGEAVASRIK) are Cytoplasmic-facing.

This sequence belongs to the major facilitator superfamily. Sugar transporter (TC 2.A.1.1) family.

It localises to the membrane. In Ricinus communis (Castor bean), this protein is Sugar carrier protein A (STA).